We begin with the raw amino-acid sequence, 1056 residues long: MPRDPSIKKVLLIGSGPIQIGQAAEFDFSGSQACRALREEGVSVVLVNSNPATIQTDPDMADVTYVEPLQADIIAKIIKKEKPDGILSGMGGQTGLNLTAELAEMGALEGVKILGTPLKAIYEGEDREKFRDLMNRIGEPVPRSVIVSSLDQLEHAASVVGFPAIIRPAYTLGGAGGGIAYNLDELRRIVELGLGKSRIHQVLIEESVAGWKEIEFEVMRDANDTCITICGMENVDPMGVHTGESVVVAPILTLRDDEFHLLRNAALKIIRALDVQGGCNIQFAFKGDDEYRVIEVNPRVSRSSALASKATGYPIARVASKIAIGLRLDEILNTVTGKTPASFEPSIDYVVVKVPRWPFDKFKTADRTLTTAMKSTGEVMAIGRCVEEAFLKALRSLDTDVEHHTVLSELKMILSRPTDERFGALFDALRQGMTLNEIAEITRITPFWLEKIQNIVEMEKALTAHPDDATILKAKEFGFSDLEIAQYSGKDVSEVESKVGLPVYKMVDTCAAEFPAQTPYFYSTYGDKVCEVTHSDRKKVMILGSGPIRIGQGIEFDYCTVHAVTALREDGYEVHVVNNNPETVSTDFDTSDRLFFEPMTLEDVSHILQKDDYYGVMVQFGGQNAVNLAVPLKNEIDRLNLKTRILGTTPDAMDMAEDRDRFSVLLDSLSIPTPPNGSAYSEQEAYATAERIGYPVLVRPSYVLGGRAMEIVHDDTELATYMREAVRVSKSHPVLIDRFLQNAIELDVDAVCDGTDVIIGGIMEHIETAGVHSGDSACVIPPQSLSPEILADVRDYTRKIALGLGVVGLVNIQFAVQGSTVYVLEANPRASRTVPFVAKSVGIPLAKIAARVMMGERLADMPYKEIEVSHVAVKEVLLPFNKLPGVDTVLGPEMKSTGEVMGIDYDFGRAYYKASIAAHNRLPKSGNVFISVTDDLKDQILQVAKTFTENGLSIYATSGTVEFFAERGITANLVRKIAEGSPNVLDMLRAGEISLIINNFADKQSRHDHQQIMRVAVDYGTPYITTLQAAVAAAEAINSVREENLTIEPLQHYIGR.

The segment at 1 to 398 is carboxyphosphate synthetic domain; that stretch reads MPRDPSIKKV…AFLKALRSLD (398 aa). ATP-binding residues include R127, R167, G173, G174, E206, V208, E213, G239, V240, H241, Q282, and E295. Residues 131-324 form the ATP-grasp 1 domain; it reads RDLMNRIGEP…IARVASKIAI (194 aa). Mg(2+)-binding residues include Q282, E295, and N297. Q282, E295, and N297 together coordinate Mn(2+). Residues 399–532 are oligomerization domain; it reads TDVEHHTVLS…STYGDKVCEV (134 aa). The segment at 533–921 is carbamoyl phosphate synthetic domain; it reads THSDRKKVMI…YKASIAAHNR (389 aa). The ATP-grasp 2 domain occupies 663–854; it reads SVLLDSLSIP…LAKIAARVMM (192 aa). Residues R699, R738, L740, E745, G770, V771, H772, S773, Q813, and E825 each coordinate ATP. Residues Q813, E825, and N827 each coordinate Mg(2+). Mn(2+)-binding residues include Q813, E825, and N827. Residues 920–1056 form the MGS-like domain; that stretch reads NRLPKSGNVF…IEPLQHYIGR (137 aa). Residues 922–1056 are allosteric domain; sequence LPKSGNVFIS…IEPLQHYIGR (135 aa).

The protein belongs to the CarB family. In terms of assembly, composed of two chains; the small (or glutamine) chain promotes the hydrolysis of glutamine to ammonia, which is used by the large (or ammonia) chain to synthesize carbamoyl phosphate. Tetramer of heterodimers (alpha,beta)4. The cofactor is Mg(2+). Mn(2+) is required as a cofactor.

The catalysed reaction is hydrogencarbonate + L-glutamine + 2 ATP + H2O = carbamoyl phosphate + L-glutamate + 2 ADP + phosphate + 2 H(+). It catalyses the reaction hydrogencarbonate + NH4(+) + 2 ATP = carbamoyl phosphate + 2 ADP + phosphate + 2 H(+). Its pathway is amino-acid biosynthesis; L-arginine biosynthesis; carbamoyl phosphate from bicarbonate: step 1/1. It functions in the pathway pyrimidine metabolism; UMP biosynthesis via de novo pathway; (S)-dihydroorotate from bicarbonate: step 1/3. In terms of biological role, large subunit of the glutamine-dependent carbamoyl phosphate synthetase (CPSase). CPSase catalyzes the formation of carbamoyl phosphate from the ammonia moiety of glutamine, carbonate, and phosphate donated by ATP, constituting the first step of 2 biosynthetic pathways, one leading to arginine and/or urea and the other to pyrimidine nucleotides. The large subunit (synthetase) binds the substrates ammonia (free or transferred from glutamine from the small subunit), hydrogencarbonate and ATP and carries out an ATP-coupled ligase reaction, activating hydrogencarbonate by forming carboxy phosphate which reacts with ammonia to form carbamoyl phosphate. The sequence is that of Carbamoyl phosphate synthase large chain from Methanospirillum hungatei JF-1 (strain ATCC 27890 / DSM 864 / NBRC 100397 / JF-1).